The chain runs to 606 residues: Putative helicase 172L (606 aa).

The 206-residue stretch at 59–264 (GEKTWGVRGG…WAQLRFCGYK (206 aa)) folds into the Helicase ATP-binding domain. 72 to 79 (LCMGLGKT) provides a ligand contact to ATP. One can recognise a Helicase C-terminal domain in the interval 437 to 586 (YIKSSNFEIS…ASYLEGKERI (150 aa)).

The protein belongs to the SNF2/RAD54 helicase family.

In Invertebrate iridescent virus 6 (IIV-6), this protein is Putative helicase 172L.